Reading from the N-terminus, the 209-residue chain is Na(+)-translocating NADH-quinone reductase subunit D (209 aa).

5 helical membrane-spanning segments follow: residues 42 to 62 (LVMTIAVTLVTAFSSFFISLI), 72 to 92 (IIVQMAIIASLVIVVDQILQA), 103 to 123 (VFVGLIITNCIVMGRAEAYAM), 131 to 151 (FMDGIGNGLGYGVILVLVGFL), and 178 to 198 (NGLFLLAPSAFFIIGMLIWGL).

This sequence belongs to the NqrDE/RnfAE family. Composed of six subunits; NqrA, NqrB, NqrC, NqrD, NqrE and NqrF.

The protein resides in the cell inner membrane. It carries out the reaction a ubiquinone + n Na(+)(in) + NADH + H(+) = a ubiquinol + n Na(+)(out) + NAD(+). In terms of biological role, NQR complex catalyzes the reduction of ubiquinone-1 to ubiquinol by two successive reactions, coupled with the transport of Na(+) ions from the cytoplasm to the periplasm. NqrA to NqrE are probably involved in the second step, the conversion of ubisemiquinone to ubiquinol. This chain is Na(+)-translocating NADH-quinone reductase subunit D, found in Photorhabdus laumondii subsp. laumondii (strain DSM 15139 / CIP 105565 / TT01) (Photorhabdus luminescens subsp. laumondii).